A 211-amino-acid polypeptide reads, in one-letter code: Transcription factor bHLH150 (211 aa).

Residues 1–15 (MSSEQGNGSNPSTSP) are compositionally biased toward polar residues. A disordered region spans residues 1 to 23 (MSSEQGNGSNPSTSPEVEGTKTI). The 50-residue stretch at 135 to 184 (AIRGSGGSGRRRKLSAVGNRVRVLGGLVPGCRRTALPELLDETADYIAAL) folds into the bHLH domain.

As to quaternary structure, homodimer. Interacts with PRE3 and ASK7. Phosphorylated by ASK7.

Its subcellular location is the nucleus. Atypical bHLH transcription factor probably unable to bind DNA. Negatively regulates brassinosteroid signaling. The sequence is that of Transcription factor bHLH150 (BHLH150) from Arabidopsis thaliana (Mouse-ear cress).